The following is a 537-amino-acid chain: Putative cysteine ligase BshC (537 aa).

Residues 422-450 (IEKVEGMIEQQRRLNKDLLDEVAGNQNNI) are a coiled coil.

Belongs to the BshC family.

Involved in bacillithiol (BSH) biosynthesis. May catalyze the last step of the pathway, the addition of cysteine to glucosamine malate (GlcN-Mal) to generate BSH. In Staphylococcus aureus (strain USA300), this protein is Putative cysteine ligase BshC.